Here is a 937-residue protein sequence, read N- to C-terminus: Isoleucine--tRNA ligase (937 aa).

Positions 58–68 (PYANGNIHIGH) match the 'HIGH' region motif. Position 560 (E560) interacts with L-isoleucyl-5'-AMP. The 'KMSKS' region motif lies at 601–605 (KMSKS). Position 604 (K604) interacts with ATP. Residues C900, C903, C920, and C923 each contribute to the Zn(2+) site.

It belongs to the class-I aminoacyl-tRNA synthetase family. IleS type 1 subfamily. In terms of assembly, monomer. Zn(2+) serves as cofactor.

It is found in the cytoplasm. It carries out the reaction tRNA(Ile) + L-isoleucine + ATP = L-isoleucyl-tRNA(Ile) + AMP + diphosphate. Functionally, catalyzes the attachment of isoleucine to tRNA(Ile). As IleRS can inadvertently accommodate and process structurally similar amino acids such as valine, to avoid such errors it has two additional distinct tRNA(Ile)-dependent editing activities. One activity is designated as 'pretransfer' editing and involves the hydrolysis of activated Val-AMP. The other activity is designated 'posttransfer' editing and involves deacylation of mischarged Val-tRNA(Ile). The sequence is that of Isoleucine--tRNA ligase from Thioalkalivibrio sulfidiphilus (strain HL-EbGR7).